The sequence spans 113 residues: MSQAQQIKVSDKAEALVENLKENKVIGRKEIKIKVYHIGSPTPSRADIRKAISSFIGAKEDLVVIRKINTGYGAGISEATIHVYSEKDVLSKFEPAHLVNRGNKAKTQGEASG.

Belongs to the eukaryotic ribosomal protein eS24 family.

This chain is Small ribosomal subunit protein eS24, found in Metallosphaera sedula (strain ATCC 51363 / DSM 5348 / JCM 9185 / NBRC 15509 / TH2).